Here is a 433-residue protein sequence, read N- to C-terminus: Enolase (433 aa).

Gln167 contributes to the (2R)-2-phosphoglycerate binding site. The Proton donor role is filled by Glu209. Positions 246, 291, and 318 each coordinate Mg(2+). Residues Lys343, Arg372, Ser373, and Lys394 each coordinate (2R)-2-phosphoglycerate. Catalysis depends on Lys343, which acts as the Proton acceptor.

The protein belongs to the enolase family. Component of the RNA degradosome, a multiprotein complex involved in RNA processing and mRNA degradation. Requires Mg(2+) as cofactor.

It is found in the cytoplasm. It localises to the secreted. The protein resides in the cell surface. The enzyme catalyses (2R)-2-phosphoglycerate = phosphoenolpyruvate + H2O. It functions in the pathway carbohydrate degradation; glycolysis; pyruvate from D-glyceraldehyde 3-phosphate: step 4/5. In terms of biological role, catalyzes the reversible conversion of 2-phosphoglycerate (2-PG) into phosphoenolpyruvate (PEP). It is essential for the degradation of carbohydrates via glycolysis. The chain is Enolase from Aeromonas salmonicida (strain A449).